A 180-amino-acid chain; its full sequence is MIMSLPQCSHLRLSILAATAAMLMVITTAQIGGQVIQVELWCVAKNNAEDSSLQTAIEWACGQGGADCGPIQQGGPCNDPTDVQKMASFVFNNYYLKNGEEDEACNFNNNAALTSLNPSQGTCKYPSSKGANNGRLADDTSMGAGQADMSRGGRPISSSWMVTFIGFGSLLTMTWIIHHL.

An N-terminal signal peptide occupies residues 1–29 (MIMSLPQCSHLRLSILAATAAMLMVITTA). Cysteines 42 and 105 form a disulfide. The tract at residues 126–151 (PSSKGANNGRLADDTSMGAGQADMSR) is disordered. Ser-157 is lipidated: GPI-anchor amidated serine. The propeptide at 158-180 (SSWMVTFIGFGSLLTMTWIIHHL) is removed in mature form.

Contains two additional disulfide bonds.

The protein localises to the cell membrane. It is found in the cell junction. The protein resides in the plasmodesma. This Arabidopsis thaliana (Mouse-ear cress) protein is PLASMODESMATA CALLOSE-BINDING PROTEIN 5 (PDCB5).